A 166-amino-acid polypeptide reads, in one-letter code: Protein-export protein SecB (166 aa).

Belongs to the SecB family. In terms of assembly, homotetramer, a dimer of dimers. One homotetramer interacts with 1 SecA dimer.

It localises to the cytoplasm. One of the proteins required for the normal export of preproteins out of the cell cytoplasm. It is a molecular chaperone that binds to a subset of precursor proteins, maintaining them in a translocation-competent state. It also specifically binds to its receptor SecA. This Roseobacter denitrificans (strain ATCC 33942 / OCh 114) (Erythrobacter sp. (strain OCh 114)) protein is Protein-export protein SecB.